A 400-amino-acid chain; its full sequence is Queuine tRNA-ribosyltransferase (400 aa).

The active-site Proton acceptor is the Asp-93. Substrate-binding positions include 93–97, Asp-147, Gln-190, and Gly-217; that span reads DSGGF. The interval 248 to 254 is RNA binding; that stretch reads GVGSPED. The active-site Nucleophile is Asp-267. The tract at residues 272 to 276 is RNA binding; important for wobble base 34 recognition; sequence TRIAR. Residues Cys-305, Cys-307, Cys-310, and His-336 each coordinate Zn(2+). Residues 375–400 form a disordered region; sequence RRERARAAGGAGHAPGPAEPLLPENR. Residues 388–400 show a composition bias toward low complexity; sequence APGPAEPLLPENR.

The protein belongs to the queuine tRNA-ribosyltransferase family. Homodimer. Within each dimer, one monomer is responsible for RNA recognition and catalysis, while the other monomer binds to the replacement base PreQ1. Requires Zn(2+) as cofactor.

The enzyme catalyses 7-aminomethyl-7-carbaguanine + guanosine(34) in tRNA = 7-aminomethyl-7-carbaguanosine(34) in tRNA + guanine. It functions in the pathway tRNA modification; tRNA-queuosine biosynthesis. Catalyzes the base-exchange of a guanine (G) residue with the queuine precursor 7-aminomethyl-7-deazaguanine (PreQ1) at position 34 (anticodon wobble position) in tRNAs with GU(N) anticodons (tRNA-Asp, -Asn, -His and -Tyr). Catalysis occurs through a double-displacement mechanism. The nucleophile active site attacks the C1' of nucleotide 34 to detach the guanine base from the RNA, forming a covalent enzyme-RNA intermediate. The proton acceptor active site deprotonates the incoming PreQ1, allowing a nucleophilic attack on the C1' of the ribose to form the product. After dissociation, two additional enzymatic reactions on the tRNA convert PreQ1 to queuine (Q), resulting in the hypermodified nucleoside queuosine (7-(((4,5-cis-dihydroxy-2-cyclopenten-1-yl)amino)methyl)-7-deazaguanosine). This is Queuine tRNA-ribosyltransferase from Symbiobacterium thermophilum (strain DSM 24528 / JCM 14929 / IAM 14863 / T).